A 354-amino-acid chain; its full sequence is MSDFERTEFELPPGVGHSQNEDLNPQQTAGDSDIDTSLRPKSLDEFIGQPKVRTQLDLVLGGARSRGVAPDHVLLAGPPGLGKTTMAMIIAQELGSSLRMTSGPALERAGDLAAMLSNLMEGDVLFIDEIHRMARPAEEMLYMAMEDFRIDVIVGKGPGATSIPIEIAPFTLVGATTRAGMLTGPLRDRFGFTAQMEFYDTADLTRVVTRAAGILGVDITGDAAAEIASRSRGTPRIANRLLRRVRDFADVNADGKITVEVARAALLVFDVDESGLDRLDRAVIEALVKGHGGGPVGVNTLALAVGEEPSTVEEVCEPYLVRAGMVSRTPRGRVATAAAWRHIGLEPPEGTIGL.

Positions 1–38 (MSDFERTEFELPPGVGHSQNEDLNPQQTAGDSDIDTSL) are disordered. Residues 2 to 199 (SDFERTEFEL…FGFTAQMEFY (198 aa)) form a large ATPase domain (RuvB-L) region. The span at 17–30 (HSQNEDLNPQQTAG) shows a compositional bias: polar residues. ATP-binding positions include Leu38, Arg39, Gly80, Lys83, Thr84, Thr85, 146–148 (EDF), Arg189, Tyr199, and Arg236. Residue Thr84 participates in Mg(2+) binding. Positions 200–270 (DTADLTRVVT…VARAALLVFD (71 aa)) are small ATPAse domain (RuvB-S). The tract at residues 273 to 354 (ESGLDRLDRA…LEPPEGTIGL (82 aa)) is head domain (RuvB-H). DNA contacts are provided by Arg328 and Arg333.

It belongs to the RuvB family. Homohexamer. Forms an RuvA(8)-RuvB(12)-Holliday junction (HJ) complex. HJ DNA is sandwiched between 2 RuvA tetramers; dsDNA enters through RuvA and exits via RuvB. An RuvB hexamer assembles on each DNA strand where it exits the tetramer. Each RuvB hexamer is contacted by two RuvA subunits (via domain III) on 2 adjacent RuvB subunits; this complex drives branch migration. In the full resolvosome a probable DNA-RuvA(4)-RuvB(12)-RuvC(2) complex forms which resolves the HJ.

The protein localises to the cytoplasm. The enzyme catalyses ATP + H2O = ADP + phosphate + H(+). Functionally, the RuvA-RuvB-RuvC complex processes Holliday junction (HJ) DNA during genetic recombination and DNA repair, while the RuvA-RuvB complex plays an important role in the rescue of blocked DNA replication forks via replication fork reversal (RFR). RuvA specifically binds to HJ cruciform DNA, conferring on it an open structure. The RuvB hexamer acts as an ATP-dependent pump, pulling dsDNA into and through the RuvAB complex. RuvB forms 2 homohexamers on either side of HJ DNA bound by 1 or 2 RuvA tetramers; 4 subunits per hexamer contact DNA at a time. Coordinated motions by a converter formed by DNA-disengaged RuvB subunits stimulates ATP hydrolysis and nucleotide exchange. Immobilization of the converter enables RuvB to convert the ATP-contained energy into a lever motion, pulling 2 nucleotides of DNA out of the RuvA tetramer per ATP hydrolyzed, thus driving DNA branch migration. The RuvB motors rotate together with the DNA substrate, which together with the progressing nucleotide cycle form the mechanistic basis for DNA recombination by continuous HJ branch migration. Branch migration allows RuvC to scan DNA until it finds its consensus sequence, where it cleaves and resolves cruciform DNA. The sequence is that of Holliday junction branch migration complex subunit RuvB from Corynebacterium jeikeium (strain K411).